A 137-amino-acid polypeptide reads, in one-letter code: Nucleoside diphosphate kinase (137 aa).

ATP is bound by residues K9, F57, R85, T91, R102, and N112. The active-site Pros-phosphohistidine intermediate is the H115.

The protein belongs to the NDK family. As to quaternary structure, homotetramer. The cofactor is Mg(2+).

It is found in the cytoplasm. The enzyme catalyses a 2'-deoxyribonucleoside 5'-diphosphate + ATP = a 2'-deoxyribonucleoside 5'-triphosphate + ADP. The catalysed reaction is a ribonucleoside 5'-diphosphate + ATP = a ribonucleoside 5'-triphosphate + ADP. Major role in the synthesis of nucleoside triphosphates other than ATP. The ATP gamma phosphate is transferred to the NDP beta phosphate via a ping-pong mechanism, using a phosphorylated active-site intermediate. This Geobacter sulfurreducens (strain ATCC 51573 / DSM 12127 / PCA) protein is Nucleoside diphosphate kinase.